Consider the following 189-residue polypeptide: Large ribosomal subunit protein uL6 (189 aa).

The protein belongs to the universal ribosomal protein uL6 family. In terms of assembly, part of the 50S ribosomal subunit.

Functionally, this protein binds to the 23S rRNA, and is important in its secondary structure. It is located near the subunit interface in the base of the L7/L12 stalk, and near the tRNA binding site of the peptidyltransferase center. This Bacteroides fragilis (strain ATCC 25285 / DSM 2151 / CCUG 4856 / JCM 11019 / LMG 10263 / NCTC 9343 / Onslow / VPI 2553 / EN-2) protein is Large ribosomal subunit protein uL6.